A 677-amino-acid polypeptide reads, in one-letter code: Gamma-tubulin complex subunit mod21 (677 aa).

In terms of assembly, component of the gamma-tubulin complex composed of at least alp4, alp6, alp16, ghf1, gtb1 and mod21.

The protein resides in the cytoplasm. It localises to the cytoskeleton. The protein localises to the microtubule organizing center. It is found in the spindle pole body. Functionally, component of the gamma-tubulin complex that is required for the regulation of both interphase microtubule organization and nucleation, and mitotic bipolar spindles. Required for correct septation. The polypeptide is Gamma-tubulin complex subunit mod21 (Schizosaccharomyces pombe (strain 972 / ATCC 24843) (Fission yeast)).